A 330-amino-acid polypeptide reads, in one-letter code: Dipeptide transport ATP-binding protein DppD (330 aa).

In terms of domain architecture, ABC transporter spans Val-6–Leu-254. Gly-40 to Ser-47 serves as a coordination point for ATP.

Belongs to the ABC transporter superfamily.

The protein resides in the cell inner membrane. It carries out the reaction a dipeptide(out) + ATP + H2O = a dipeptide(in) + ADP + phosphate + H(+). Its function is as follows. Part of the ABC transporter DppBCDF involved in dipeptide transport. Responsible for energy coupling to the transport system. In Haemophilus influenzae (strain ATCC 51907 / DSM 11121 / KW20 / Rd), this protein is Dipeptide transport ATP-binding protein DppD (dppD).